The following is a 398-amino-acid chain: S-adenosylmethionine synthase (398 aa).

Histidine 16 is an ATP binding site. Aspartate 18 serves as a coordination point for Mg(2+). A K(+)-binding site is contributed by glutamate 51. L-methionine-binding residues include glutamate 64 and glutamine 108. A flexible loop region spans residues glutamine 108–alanine 118. ATP-binding positions include aspartate 176–lysine 178, lysine 242–phenylalanine 243, aspartate 251, arginine 257–lysine 258, alanine 274, and lysine 278. Aspartate 251 serves as a coordination point for L-methionine. Lysine 282 is an L-methionine binding site.

Belongs to the AdoMet synthase family. Homotetramer; dimer of dimers. The cofactor is Mg(2+). K(+) is required as a cofactor.

It localises to the cytoplasm. The catalysed reaction is L-methionine + ATP + H2O = S-adenosyl-L-methionine + phosphate + diphosphate. Its pathway is amino-acid biosynthesis; S-adenosyl-L-methionine biosynthesis; S-adenosyl-L-methionine from L-methionine: step 1/1. Catalyzes the formation of S-adenosylmethionine (AdoMet) from methionine and ATP. The overall synthetic reaction is composed of two sequential steps, AdoMet formation and the subsequent tripolyphosphate hydrolysis which occurs prior to release of AdoMet from the enzyme. In Rhodopseudomonas palustris (strain BisB5), this protein is S-adenosylmethionine synthase.